Here is a 1620-residue protein sequence, read N- to C-terminus: ABC-type organic anion transporter ABCA8B (1620 aa).

Transmembrane regions (helical) follow at residues 30–50, 223–243, 267–287, 298–318, 326–346, 352–372, and 396–416; these read SLME…YPHG, FFIF…SINV, SWGL…ALVI, FMVV…LAFL, SVLT…LGFT, LPAP…TLGM, and LIIA…ALMM. The ABC transporter 1 domain occupies 479–714; sequence IRIRNISKEY…WGVGYHLSLQ (236 aa). Residue 515–522 participates in ATP binding; it reads GHSGAGKS. A glycan (N-linked (GlcNAc...) asparagine) is linked at Asn723. 8 helical membrane-spanning segments follow: residues 860-880, 979-999, 1023-1043, 1069-1089, 1105-1125, 1135-1155, 1164-1184, and 1194-1214; these read TLLS…FENI, CFPV…KPSA, TAFW…SSVT, MVDI…DYLF, IPCS…ISFI, IWSL…LLAF, IIFL…LHLF, and VIEP…FIFT. The ABC transporter 2 domain maps to 1283–1516; that stretch reads LRKEYAGKQK…FGKDYLLEMK (234 aa). 1321–1328 lines the ATP pocket; the sequence is GHNGAGKS.

It belongs to the ABC transporter superfamily. ABCA family. Expressed in heart, brain, lung, liver and skeletal muscle. Highly expressed in the liver, and is also abundant in heart and skeletal muscle. Highly expressed in liver.

Its subcellular location is the cell membrane. The protein localises to the basolateral cell membrane. It carries out the reaction taurocholate(in) + ATP + H2O = taurocholate(out) + ADP + phosphate + H(+). The enzyme catalyses cholesterol(in) + ATP + H2O = cholesterol(out) + ADP + phosphate + H(+). Cholesterol efflux is increased by extracellularly applied taurocholate. Functionally, mediates cholesterol and taurocholate efflux. Through the interaction with ABCA1 potentiates the cholesterol efflux to lipid-free APOA1, in turn regulates high-density lipoprotein cholesterol levels. The chain is ABC-type organic anion transporter ABCA8B from Mus musculus (Mouse).